The primary structure comprises 380 residues: Cytochrome b (380 aa).

4 consecutive transmembrane segments (helical) span residues 33-53 (FGSLLGICLMVQIITGLFLAM), 77-98 (WLIRYAHANGASMFFICLFIHV), 113-133 (WNIGIILLLTTMATAFVGYVL), and 178-198 (FFAFHFILPFIITALVLVHLL). 2 residues coordinate heme b: His83 and His97. 2 residues coordinate heme b: His182 and His196. An a ubiquinone-binding site is contributed by His201. Helical transmembrane passes span 226-246 (IKDILGVLLLLMVLMFLVLFF), 288-308 (LGGVLALLLSILILAAFPLLN), 320-340 (ITQTLYWIFVANLLILTWIGG), and 347-367 (FTTIGQISSIMYFMIIVIFMP).

The protein belongs to the cytochrome b family. As to quaternary structure, the cytochrome bc1 complex contains 11 subunits: 3 respiratory subunits (MT-CYB, CYC1 and UQCRFS1), 2 core proteins (UQCRC1 and UQCRC2) and 6 low-molecular weight proteins (UQCRH/QCR6, UQCRB/QCR7, UQCRQ/QCR8, UQCR10/QCR9, UQCR11/QCR10 and a cleavage product of UQCRFS1). This cytochrome bc1 complex then forms a dimer. The cofactor is heme b.

The protein resides in the mitochondrion inner membrane. Component of the ubiquinol-cytochrome c reductase complex (complex III or cytochrome b-c1 complex) that is part of the mitochondrial respiratory chain. The b-c1 complex mediates electron transfer from ubiquinol to cytochrome c. Contributes to the generation of a proton gradient across the mitochondrial membrane that is then used for ATP synthesis. This is Cytochrome b (MT-CYB) from Microryzomys minutus (Forest small rice rat).